The primary structure comprises 165 residues: Protein SprT (165 aa).

The SprT-like domain maps to 20 to 163; that stretch reads ENLAQANLKL…RCVHCGEPLV (144 aa). Position 78 (His-78) interacts with Zn(2+). The active site involves Glu-79. Residue His-82 coordinates Zn(2+).

This sequence belongs to the SprT family. The cofactor is Zn(2+).

It localises to the cytoplasm. This Salmonella arizonae (strain ATCC BAA-731 / CDC346-86 / RSK2980) protein is Protein SprT.